The chain runs to 464 residues: tRNA modification GTPase MnmE (464 aa).

(6S)-5-formyl-5,6,7,8-tetrahydrofolate contacts are provided by arginine 27, glutamate 90, and lysine 129. The TrmE-type G domain occupies 222–384 (GITLVLAGSV…LYDKIRTLIS (163 aa)). GTP is bound by residues 232–237 (NAGKSS), 251–257 (SSYPGTT), and 276–279 (DTAG). Serine 236 and threonine 257 together coordinate Mg(2+). Lysine 464 is a (6S)-5-formyl-5,6,7,8-tetrahydrofolate binding site.

This sequence belongs to the TRAFAC class TrmE-Era-EngA-EngB-Septin-like GTPase superfamily. TrmE GTPase family. As to quaternary structure, homodimer. Heterotetramer of two MnmE and two MnmG subunits. K(+) is required as a cofactor.

It localises to the cytoplasm. Functionally, exhibits a very high intrinsic GTPase hydrolysis rate. Involved in the addition of a carboxymethylaminomethyl (cmnm) group at the wobble position (U34) of certain tRNAs, forming tRNA-cmnm(5)s(2)U34. This is tRNA modification GTPase MnmE from Borreliella afzelii (strain PKo) (Borrelia afzelii).